We begin with the raw amino-acid sequence, 463 residues long: Putative WAS protein family homolog 3 (463 aa).

Positions 1-54 are required for WASH complex assembly; the sequence is MTPVRMQHSLAGQTYAVPLIQPDLRREEAVQQMADALQYLQKVSGDIFSRISQQ. A WHD1 region spans residues 1 to 165; sequence MTPVRMQHSL…EGLGGLPSNI (165 aa). A Glycyl lysine isopeptide (Lys-Gly) (interchain with G-Cter in ubiquitin) cross-link involves residue lysine 218. The segment at 295–463 is disordered; it reads QDGVLTPPPP…AEEDEDDWES (169 aa). Positions 300-312 are enriched in pro residues; the sequence is TPPPPPPPPPPAP. Positions 347 to 463 are VCA; the sequence is QGAPREVVDP…AEEDEDDWES (117 aa). The WH2 domain maps to 359-381; the sequence is GRATLLESIRQAGGIGKAKLRSM. The span at 380 to 396 shows a compositional bias: basic and acidic residues; that stretch reads SMKERKLEKKQQKEQEQ. Positions 422-434 are enriched in gly residues; it reads SGKGPGAGEGPGG. Positions 454–463 are enriched in acidic residues; the sequence is AEEDEDDWES.

Belongs to the WASH1 family. Component of the WASH core complex also described as WASH regulatory complex (SHRC) composed of WASH (WASHC1, WASH2P or WASH3P), WASHC2 (WASHC2A or WASHC2C), WASHC3, WASHC4 and WASHC5. The WASH core complex associates with the F-actin-capping protein dimer (formed by CAPZA1, CAPZA2 or CAPZA3 and CAPZB) in a transient or substoichiometric manner which was initially described as WASH complex. Interacts (via WHD1 region) with WASHC2C; the interaction is direct. Interacts with alpha-tubulin. Interacts with BECN1; WASHC1 and AMBRA1 can competitively interact with BECN1. Interacts with BLOC1S2; may associate with the BLOC-1 complex. Interacts with tubulin gamma chain (TUBG1 or TUBG2). Interacts with EXOC1, EXOC4, EXOC8; in MMP14-positive endosomes in breast tumor cells; indicative for an association with the exocyst complex.

The protein resides in the early endosome. Its subcellular location is the early endosome membrane. The protein localises to the recycling endosome membrane. It localises to the cell projection. It is found in the lamellipodium. The protein resides in the filopodium. Its subcellular location is the cytoplasmic vesicle. The protein localises to the autophagosome. It localises to the cytoplasm. It is found in the cytoskeleton. The protein resides in the microtubule organizing center. Its subcellular location is the centrosome. The protein localises to the centriole. In terms of biological role, acts as a nucleation-promoting factor at the surface of endosomes, where it recruits and activates the Arp2/3 complex to induce actin polymerization, playing a key role in the fission of tubules that serve as transport intermediates during endosome sorting. Involved in endocytic trafficking of EGF. Involved in transferrin receptor recycling. Regulates the trafficking of endosomal alpha5beta1 integrin to the plasma membrane and involved in invasive cell migration. In T-cells involved in endosome-to-membrane recycling of receptors including T-cell receptor (TCR), CD28 and ITGAL; proposed to be implicated in T cell proliferation and effector function. In dendritic cells involved in endosome-to-membrane recycling of major histocompatibility complex (MHC) class II probably involving retromer and subsequently allowing antigen sampling, loading and presentation during T-cell activation. Involved in Arp2/3 complex-dependent actin assembly driving Salmonella typhimurium invasion independent of ruffling. Involved in the exocytosis of MMP14 leading to matrix remodeling during invasive migration and implicating late endosome-to-plasma membrane tubular connections and cooperation with the exocyst complex. Involved in negative regulation of autophagy independently from its role in endosomal sorting by inhibiting BECN1 ubiquitination to inactivate PIK3C3/Vps34 activity. In Homo sapiens (Human), this protein is Putative WAS protein family homolog 3 (WASH3P).